The chain runs to 1854 residues: Calcium-channel protein cch1 (1854 aa).

The segment covering 1-15 (MSSSSNSDPSSSPDN) has biased composition (low complexity). Positions 1-33 (MSSSSNSDPSSSPDNTDFIPLKDNPKDTSSYIN) are disordered. N-linked (GlcNAc...) asparagine glycosylation is present at Asn-40. 3 consecutive transmembrane segments (helical) span residues 184–204 (HPLY…LLMI), 220–240 (IIVI…LFGF), and 274–294 (DFVA…QGIF). Asn-310 carries an N-linked (GlcNAc...) asparagine glycan. 8 helical membrane-spanning segments follow: residues 328 to 348 (PLVQ…ILGV), 427 to 447 (FFNS…TDIM), 461 to 481 (LFII…IAVV), 514 to 534 (YLFY…VTLC), 549 to 569 (LIFY…RFFA), 581 to 601 (YTNL…LPSI), 606 to 626 (VAFG…ILLI), and 642 to 662 (QLLN…LCAV). Asn-699 carries N-linked (GlcNAc...) asparagine glycosylation. A helical membrane pass occupies residues 723-743 (FFTLWFLFSNNVVLSMFIAVI). Residue Asn-786 is glycosylated (N-linked (GlcNAc...) asparagine). The next 3 helical transmembrane spans lie at 946-966 (VFIY…TPIY), 980-1000 (FVWT…IKII), and 1021-1041 (FFVL…HALL). The N-linked (GlcNAc...) asparagine glycan is linked to Asn-1058. 2 helical membrane passes run 1075 to 1095 (FFKI…FALW) and 1148 to 1168 (FPHA…VDIM). N-linked (GlcNAc...) asparagine glycosylation is present at Asn-1184. 4 helical membrane passes run 1193 to 1213 (FVLF…AIII), 1274 to 1294 (FTGL…PCPI), 1302 to 1322 (SIFL…VYGL), and 1331 to 1351 (FWNM…IAIL). Asn-1356 is a glycosylation site (N-linked (GlcNAc...) asparagine). Helical transmembrane passes span 1358-1378 (SLTL…IPKF), 1393-1413 (PSIF…AIAF), and 1486-1506 (FIAW…TVVF). N-linked (GlcNAc...) asparagine glycans are attached at residues Asn-1508 and Asn-1773. A disordered region spans residues 1764–1792 (TIASGEGDDNHSVEDHLKVPTDNEPRRSP). Basic and acidic residues predominate over residues 1771-1790 (DDNHSVEDHLKVPTDNEPRR).

Belongs to the calcium channel alpha-1 subunit (TC 1.A.1.11) family. In terms of assembly, interacts with yam8 to form a Ca(2+) influx channel.

The protein localises to the cell membrane. Its function is as follows. Voltage-gated, high-affinity calcium channel that functions together with yam8 to mediate calcium entry into cells. Required during conditions of environmental stress. This chain is Calcium-channel protein cch1 (cch1), found in Schizosaccharomyces pombe (strain 972 / ATCC 24843) (Fission yeast).